We begin with the raw amino-acid sequence, 243 residues long: CD48 antigen (243 aa).

The N-terminal stretch at 1 to 26 (MCSRGWDSCLALELLLLPLSLLVTSI) is a signal peptide. 2 consecutive Ig-like C2-type domains span residues 29-127 (HLVH…KLQV) and 132-212 (PKPV…VCLS). 5 N-linked (GlcNAc...) asparagine glycosylation sites follow: Asn-40, Asn-44, Asn-104, Asn-162, and Asn-189. The cysteines at positions 154 and 196 are disulfide-linked. Ser-220 is lipidated: GPI-anchor amidated serine. A propeptide spans 221–243 (FGVEWIASWLVVTVPTILGLLLT) (removed in mature form).

In terms of assembly, interacts with CD2. Interacts with CD244; this interaction is possible not only on different cells (trans interaction) but also on the same cell (cis interaction). Interacts with LCK. As to expression, widely expressed on all hematopoietic cells.

It is found in the cell membrane. It localises to the membrane raft. The protein localises to the secreted. Functionally, glycosylphosphatidylinositol (GPI)-anchored cell surface glycoprotein that interacts via its N-terminal immunoglobulin domain with cell surface receptors including CD244/2B4 or CD2 to regulate immune cell function and activation. Participates in T-cell signaling transduction by associating with CD2 and efficiently bringing the Src family protein kinase LCK and LAT to the TCR/CD3 complex. In turn, promotes LCK phosphorylation and subsequent activation. Induces the phosphorylation of the cytoplasmic immunoreceptortyrosine switch motifs (ITSMs) of CD244 initiating a series of signaling events that leads to the generation of the immunological synapse and the directed release of cytolytic granules containing perforin and granzymes by T-lymphocytes and NK-cells. The sequence is that of CD48 antigen (CD48) from Homo sapiens (Human).